The primary structure comprises 186 residues: dTTP/UTP pyrophosphatase (186 aa).

The Proton acceptor role is filled by Asp-70.

This sequence belongs to the Maf family. YhdE subfamily. A divalent metal cation serves as cofactor.

The protein resides in the cytoplasm. The catalysed reaction is dTTP + H2O = dTMP + diphosphate + H(+). It catalyses the reaction UTP + H2O = UMP + diphosphate + H(+). Functionally, nucleoside triphosphate pyrophosphatase that hydrolyzes dTTP and UTP. May have a dual role in cell division arrest and in preventing the incorporation of modified nucleotides into cellular nucleic acids. This Vibrio vulnificus (strain CMCP6) protein is dTTP/UTP pyrophosphatase.